A 327-amino-acid chain; its full sequence is Annexin A8-like protein 1 (327 aa).

Annexin repeat units follow at residues 21–92, 93–164, 177–249, and 253–324; these read FNPD…ALMY, PPYR…CLLQ, ALAL…TVVK, and NLHS…SLVG. Met266, Gly268, Gly270, and Asp310 together coordinate Ca(2+).

This sequence belongs to the annexin family.

The sequence is that of Annexin A8-like protein 1 from Homo sapiens (Human).